A 198-amino-acid chain; its full sequence is ATP-dependent Clp protease proteolytic subunit (198 aa).

Serine 98 serves as the catalytic Nucleophile. Histidine 123 is an active-site residue.

This sequence belongs to the peptidase S14 family. In terms of assembly, fourteen ClpP subunits assemble into 2 heptameric rings which stack back to back to give a disk-like structure with a central cavity, resembling the structure of eukaryotic proteasomes.

The protein localises to the cytoplasm. The catalysed reaction is Hydrolysis of proteins to small peptides in the presence of ATP and magnesium. alpha-casein is the usual test substrate. In the absence of ATP, only oligopeptides shorter than five residues are hydrolyzed (such as succinyl-Leu-Tyr-|-NHMec, and Leu-Tyr-Leu-|-Tyr-Trp, in which cleavage of the -Tyr-|-Leu- and -Tyr-|-Trp bonds also occurs).. Functionally, cleaves peptides in various proteins in a process that requires ATP hydrolysis. Has a chymotrypsin-like activity. Plays a major role in the degradation of misfolded proteins. The polypeptide is ATP-dependent Clp protease proteolytic subunit (Bacillus pumilus (strain SAFR-032)).